A 398-amino-acid chain; its full sequence is Acetate kinase (398 aa).

Asn8 lines the Mg(2+) pocket. Lys15 lines the ATP pocket. Arg89 is a binding site for substrate. Catalysis depends on Asp146, which acts as the Proton donor/acceptor. ATP is bound by residues 206–210 (HIGNG), 283–285 (DMR), and 331–335 (GMGEN). Residue Glu383 coordinates Mg(2+).

It belongs to the acetokinase family. Homodimer. The cofactor is Mg(2+). Mn(2+) serves as cofactor.

The protein localises to the cytoplasm. The catalysed reaction is acetate + ATP = acetyl phosphate + ADP. It functions in the pathway metabolic intermediate biosynthesis; acetyl-CoA biosynthesis; acetyl-CoA from acetate: step 1/2. Its function is as follows. Catalyzes the formation of acetyl phosphate from acetate and ATP. Can also catalyze the reverse reaction. This chain is Acetate kinase, found in Streptococcus pyogenes serotype M1.